Consider the following 276-residue polypeptide: tRNA dimethylallyltransferase (276 aa).

An interaction with substrate tRNA region spans residues 9–12 (DSLS).

It belongs to the IPP transferase family. In terms of assembly, monomer. It depends on Mg(2+) as a cofactor.

The catalysed reaction is adenosine(37) in tRNA + dimethylallyl diphosphate = N(6)-dimethylallyladenosine(37) in tRNA + diphosphate. In terms of biological role, catalyzes the transfer of a dimethylallyl group onto the adenine at position 37 in tRNAs that read codons beginning with uridine, leading to the formation of N6-(dimethylallyl)adenosine (i(6)A). This chain is tRNA dimethylallyltransferase (miaA), found in Helicobacter pylori (strain HPAG1).